Consider the following 78-residue polypeptide: Magnetosome protein MamL (78 aa).

The first 22 residues, 1 to 22 (MVRVIGSLVFGGLILLLASSNA), serve as a signal peptide directing secretion. Residues 23–38 (HMVETRFGPLIMLAPH) are Lumenal-facing. A helical membrane pass occupies residues 39–59 (FVVLGITFFLGFAIGIVLVFA). Residues 60–78 (NVMKRRKHKLPGKNIVIKR) lie on the Cytoplasmic side of the membrane.

Belongs to the magnetosome MamL family.

Its subcellular location is the magnetosome membrane. Involved in magnetite crystal maturation, but not in magnetosome vesicle tubulation or formation. One of 7 genes (mamLQBIEMO) able to induce magnetosome membrane biogenesis; coexpression of mamLQRBIEMO in a deletion of the 17 gene mamAB operon restores magnetosome vesicle formation but not magnetite biosynthesis. The protein is Magnetosome protein MamL of Magnetospirillum gryphiswaldense (strain DSM 6361 / JCM 21280 / NBRC 15271 / MSR-1).